The chain runs to 147 residues: Protein Turandot Z (147 aa).

The first 23 residues, 1 to 23, serve as a signal peptide directing secretion; the sequence is MYFAIRLSFVLAVLICLTGNGSA.

Belongs to the Turandot family.

It localises to the secreted. In terms of biological role, a humoral factor that may play a role in stress tolerance. In Drosophila melanogaster (Fruit fly), this protein is Protein Turandot Z.